We begin with the raw amino-acid sequence, 64 residues long: Sec-independent protein translocase protein TatA (64 aa).

Residues 10 to 30 (LVLILGIALIIFGPGKLPELG) form a helical membrane-spanning segment.

The protein belongs to the TatA/E family. Forms a complex with TatC.

It localises to the cell membrane. Its function is as follows. Part of the twin-arginine translocation (Tat) system that transports large folded proteins containing a characteristic twin-arginine motif in their signal peptide across membranes. TatA could form the protein-conducting channel of the Tat system. This is Sec-independent protein translocase protein TatA from Alkaliphilus oremlandii (strain OhILAs) (Clostridium oremlandii (strain OhILAs)).